The primary structure comprises 136 residues: Protein LpdD (136 aa).

The protein belongs to the CinA family.

Functionally, probably involved in tannin degradation, however the precise biochemical function in metabolism of gallate is unknown. This is Protein LpdD from Lactiplantibacillus plantarum (strain ATCC BAA-793 / NCIMB 8826 / WCFS1) (Lactobacillus plantarum).